The chain runs to 710 residues: Ent-copalyl diphosphate synthase 1 (710 aa).

K145 contributes to the substrate binding site. D277 and D279 together coordinate Mg(2+). A DXDD motif motif is present at residues 277–280 (DIDD). K364 is a substrate binding site.

It belongs to the terpene synthase family. Tpsc subfamily. Requires Mg(2+) as cofactor. As to expression, expressed in germinating seeds and leaves.

It carries out the reaction (2E,6E,10E)-geranylgeranyl diphosphate = ent-copalyl diphosphate. It participates in plant hormone biosynthesis; gibberellin biosynthesis. The protein operates within secondary metabolite biosynthesis; terpenoid biosynthesis. Its function is as follows. Involved in the biosynthesis of ent-kaurene diterpenoids natural products such as oridonin, miltiradiene, eriocalyxin B and nezukol, known to exhibit antitumor, anti-inflammatory and antibacterial activities, and in the production of gibberellins phytohormones. Catalyzes the conversion of (2E,6E,10E)-geranylgeranyl diphosphate (GGPP) to ent-copalyl diphosphate (ent-CPP). This chain is Ent-copalyl diphosphate synthase 1, found in Isodon eriocalyx (Plectranthus eriocalyx).